A 256-amino-acid polypeptide reads, in one-letter code: Isoprenyl transferase (256 aa).

Residue Asp-33 is part of the active site. Asp-33 is a binding site for Mg(2+). Residues 34 to 37, Trp-38, Arg-46, His-50, and 78 to 80 each bind substrate; these read GNGR and STE. Asn-81 functions as the Proton acceptor in the catalytic mechanism. Substrate contacts are provided by residues Trp-82, Arg-84, Arg-201, and 207-209; that span reads RIS. Glu-220 is a Mg(2+) binding site.

It belongs to the UPP synthase family. Homodimer. Requires Mg(2+) as cofactor.

Catalyzes the condensation of isopentenyl diphosphate (IPP) with allylic pyrophosphates generating different type of terpenoids. The chain is Isoprenyl transferase from Staphylococcus haemolyticus (strain JCSC1435).